Here is a 218-residue protein sequence, read N- to C-terminus: Imidazole glycerol phosphate synthase subunit HisH (218 aa).

The Glutamine amidotransferase type-1 domain occupies 12–218 (SIVVVDYGLG…RNFVDYCADQ (207 aa)). Cys-88 functions as the Nucleophile in the catalytic mechanism. Residues His-196 and Glu-198 contribute to the active site.

Heterodimer of HisH and HisF.

It localises to the cytoplasm. It catalyses the reaction 5-[(5-phospho-1-deoxy-D-ribulos-1-ylimino)methylamino]-1-(5-phospho-beta-D-ribosyl)imidazole-4-carboxamide + L-glutamine = D-erythro-1-(imidazol-4-yl)glycerol 3-phosphate + 5-amino-1-(5-phospho-beta-D-ribosyl)imidazole-4-carboxamide + L-glutamate + H(+). The enzyme catalyses L-glutamine + H2O = L-glutamate + NH4(+). It participates in amino-acid biosynthesis; L-histidine biosynthesis; L-histidine from 5-phospho-alpha-D-ribose 1-diphosphate: step 5/9. In terms of biological role, IGPS catalyzes the conversion of PRFAR and glutamine to IGP, AICAR and glutamate. The HisH subunit catalyzes the hydrolysis of glutamine to glutamate and ammonia as part of the synthesis of IGP and AICAR. The resulting ammonia molecule is channeled to the active site of HisF. The polypeptide is Imidazole glycerol phosphate synthase subunit HisH (Halobacterium salinarum (strain ATCC 700922 / JCM 11081 / NRC-1) (Halobacterium halobium)).